We begin with the raw amino-acid sequence, 364 residues long: MTVNLLDFDGESLTAWFAEQGEKPFRAKQVLRWIHRSGVADFDAMTDIAKSLREKLKAKAVVAPPAVVSDKLSDDGTRKFLIDVGNGNAVETVFIPEDDRGTLCISTQAGCALDCAFCSTGKQGFNRNLSVAEIIGQLWQANHALGAVHGDERVISNVVLMGMGEPLANFENSVAALKLMLDDNAYGLSRRRITVSTSGLVPVMDRLGDECPVALAVSLHAPNDKLRDQLVPINQKYPLKELMAACQRYLEKAPRDFITFEYIMLDGINDTDAHARELLALVKSVHCKFNLIPFNPFPGSPFRRSPAERVRHFADILMQAGIVTTTRKTRGDDIDAACGQLAGQVQDKTKRTTGRVIPLKEARS.

Glu91 (proton acceptor) is an active-site residue. Residues 97-333 form the Radical SAM core domain; the sequence is EDDRGTLCIS…TTTRKTRGDD (237 aa). A disulfide bond links Cys104 and Cys338. Residues Cys111, Cys115, and Cys118 each coordinate [4Fe-4S] cluster. S-adenosyl-L-methionine is bound by residues 164–165, Ser196, 218–220, and Asn295; these read GE and SLH. The active-site S-methylcysteine intermediate is Cys338.

It belongs to the radical SAM superfamily. RlmN family. [4Fe-4S] cluster is required as a cofactor.

Its subcellular location is the cytoplasm. It carries out the reaction adenosine(2503) in 23S rRNA + 2 reduced [2Fe-2S]-[ferredoxin] + 2 S-adenosyl-L-methionine = 2-methyladenosine(2503) in 23S rRNA + 5'-deoxyadenosine + L-methionine + 2 oxidized [2Fe-2S]-[ferredoxin] + S-adenosyl-L-homocysteine. It catalyses the reaction adenosine(37) in tRNA + 2 reduced [2Fe-2S]-[ferredoxin] + 2 S-adenosyl-L-methionine = 2-methyladenosine(37) in tRNA + 5'-deoxyadenosine + L-methionine + 2 oxidized [2Fe-2S]-[ferredoxin] + S-adenosyl-L-homocysteine. Its function is as follows. Specifically methylates position 2 of adenine 2503 in 23S rRNA and position 2 of adenine 37 in tRNAs. m2A2503 modification seems to play a crucial role in the proofreading step occurring at the peptidyl transferase center and thus would serve to optimize ribosomal fidelity. This chain is Dual-specificity RNA methyltransferase RlmN, found in Dechloromonas aromatica (strain RCB).